Reading from the N-terminus, the 154-residue chain is 6,7-dimethyl-8-ribityllumazine synthase (154 aa).

5-amino-6-(D-ribitylamino)uracil-binding positions include Phe22, 56–58, and 80–82; these read AFE and TVI. 85–86 contributes to the (2S)-2-hydroxy-3-oxobutyl phosphate binding site; that stretch reads ST. His88 serves as the catalytic Proton donor. Phe113 is a binding site for 5-amino-6-(D-ribitylamino)uracil. Arg127 contributes to the (2S)-2-hydroxy-3-oxobutyl phosphate binding site.

This sequence belongs to the DMRL synthase family.

The catalysed reaction is (2S)-2-hydroxy-3-oxobutyl phosphate + 5-amino-6-(D-ribitylamino)uracil = 6,7-dimethyl-8-(1-D-ribityl)lumazine + phosphate + 2 H2O + H(+). Its pathway is cofactor biosynthesis; riboflavin biosynthesis; riboflavin from 2-hydroxy-3-oxobutyl phosphate and 5-amino-6-(D-ribitylamino)uracil: step 1/2. Functionally, catalyzes the formation of 6,7-dimethyl-8-ribityllumazine by condensation of 5-amino-6-(D-ribitylamino)uracil with 3,4-dihydroxy-2-butanone 4-phosphate. This is the penultimate step in the biosynthesis of riboflavin. The chain is 6,7-dimethyl-8-ribityllumazine synthase from Lactococcus lactis subsp. lactis (strain IL1403) (Streptococcus lactis).